Consider the following 705-residue polypeptide: Glycogen [starch] synthase isoform 2 (705 aa).

Position 20 (arginine 20) interacts with UDP. A Phosphoserine modification is found at serine 159. Residues histidine 193 and arginine 199 each coordinate UDP-alpha-D-glucose. Residues histidine 280, glutamate 281, glutamine 283, histidine 286, and lysine 290 each contribute to the alpha-D-glucose 6-phosphate site. Arginine 320 contributes to the UDP binding site. Arginine 320 serves as a coordination point for UDP-alpha-D-glucose. 2 positions are modified to phosphoserine: serine 363 and serine 467. Histidine 500 contacts alpha-D-glucose 6-phosphate. Residues glutamate 509, tryptophan 511, and glycine 512 each coordinate UDP-alpha-D-glucose. Threonine 514 is a UDP binding site. 2 residues coordinate alpha-D-glucose 6-phosphate: arginine 583 and arginine 587. Serine 651 carries the post-translational modification Phosphoserine. Serine 655 is subject to Phosphoserine; by PHO85. Phosphoserine; by PKA occurs at positions 661 and 663. The residue at position 668 (threonine 668) is a Phosphothreonine; by PHO85. The disordered stretch occupies residues 686 to 705 (SLGVNPAADDDDDGPYADDS). Positions 693–705 (ADDDDDGPYADDS) are enriched in acidic residues.

Belongs to the glycosyltransferase 3 family. Interacts with PCL10. Phosphorylated by the cyclin-CDK PCL10-PHO85. Phosphorylation causes inactivation of enzyme.

It is found in the cytoplasm. Its subcellular location is the cytosol. It carries out the reaction [(1-&gt;4)-alpha-D-glucosyl](n) + UDP-alpha-D-glucose = [(1-&gt;4)-alpha-D-glucosyl](n+1) + UDP + H(+). Its pathway is glycan biosynthesis; glycogen biosynthesis. With respect to regulation, allosteric activation by glucose-6-phosphate, and phosphorylation by a cAMP-dependent kinase. Its function is as follows. Glycogen synthase participates in the glycogen biosynthetic process along with glycogenin and glycogen branching enzyme. Extends the primer composed of a few glucose units formed by glycogenin by adding new glucose units to it. In this context, glycogen synthase transfers the glycosyl residue from UDP-Glc to the non-reducing end of alpha-1,4-glucan. The sequence is that of Glycogen [starch] synthase isoform 2 (GSY2) from Saccharomyces cerevisiae (strain ATCC 204508 / S288c) (Baker's yeast).